We begin with the raw amino-acid sequence, 368 residues long: Peptidoglycan-recognition protein LA (368 aa).

Topologically, residues 1–127 (MFEENNSPTT…KSPSRRVTRN (127 aa)) are cytoplasmic. 2 disordered regions span residues 21–46 (QRASPAQRLHNLTSAGSSTSSSGLPL) and 101–122 (INSNNANGNGNANRSRDKSPSR). Low complexity-rich tracts occupy residues 33-43 (TSAGSSTSSSG) and 102-113 (NSNNANGNGNAN). Residues 128–148 (TILLITLILLVLATGLIVLYV) traverse the membrane as a helical segment. Residues 149 to 368 (ELNRPKPELP…MKTESWDAKQ (220 aa)) are Extracellular-facing. Cysteine 221 and cysteine 227 are oxidised to a cystine. In terms of domain architecture, N-acetylmuramoyl-L-alanine amidase spans 233–320 (TIQDSAIAEK…DVDYKLVAQN (88 aa)). 2 N-linked (GlcNAc...) asparagine glycosylation sites follow: asparagine 273 and asparagine 320.

It belongs to the N-acetylmuramoyl-L-alanine amidase 2 family. As to expression, expressed in uninduced hemocytes and mbn-2 cells.

The protein localises to the cell membrane. In terms of biological role, peptidoglycan-recognition protein probably involved in innate immunity by binding to peptidoglycans (PGN) of bacteria and activating the immune response. The chain is Peptidoglycan-recognition protein LA (PGRP-LA) from Drosophila melanogaster (Fruit fly).